The chain runs to 160 residues: Cytochrome b6-f complex subunit 4 (160 aa).

Transmembrane regions (helical) follow at residues Leu-36–Val-56, Leu-95–Glu-115, and Thr-131–Ile-151.

The protein belongs to the cytochrome b family. PetD subfamily. The 4 large subunits of the cytochrome b6-f complex are cytochrome b6, subunit IV (17 kDa polypeptide, petD), cytochrome f and the Rieske protein, while the 4 small subunits are petG, petL, petM and petN. The complex functions as a dimer.

It localises to the plastid. The protein localises to the chloroplast thylakoid membrane. Component of the cytochrome b6-f complex, which mediates electron transfer between photosystem II (PSII) and photosystem I (PSI), cyclic electron flow around PSI, and state transitions. The protein is Cytochrome b6-f complex subunit 4 of Psilotum nudum (Whisk fern).